The primary structure comprises 568 residues: Protein phosphatase 1 regulatory inhibitor subunit 16B (568 aa).

Residues 15 to 55 (EKVPTLERLRAAQKRRAQQLKKWAQYEQDLQHRKRKHERKR) are a coiled coil. Position 69 is a phosphoserine (serine 69). 4 ANK repeats span residues 100–129 (DGLTALHQCCIDNFEEIVKLLLSHGANVNA), 133–162 (ELWTPLHAAATCGHINLVKILVQYGADLLA), 228–257 (QGATLLHIAGANGYLRAAELLLDHGVRVDV), and 261–290 (DGWEPLHAAAFWGQMQMAELLVSHGASLSA). Positions 327 to 346 (RHKSSLSRRTSSAGSRGKVV) are disordered. A phosphoserine mark is found at serine 333, serine 337, and serine 350. The span at 333–342 (SRRTSSAGSR) shows a compositional bias: low complexity. The disordered stretch occupies residues 373–404 (SASEDQRNSTYNGDIRETRTDQENKDPNPRLE). Residues 386-404 (DIRETRTDQENKDPNPRLE) are compositionally biased toward basic and acidic residues. A Phosphoserine modification is found at serine 477. The tract at residues 504 to 525 (GSGVSRTGEGSSEGKAPLIGGR) is disordered. The ANK 5 repeat unit spans residues 531–560 (SNGTSVYYTVTSGDPPLLKFKAPIEEMEEK). The S-palmitoyl cysteine moiety is linked to residue cysteine 564. Residue cysteine 565 is modified to Cysteine methyl ester. Cysteine 565 carries the S-farnesyl cysteine lipid modification. Residues 566-568 (RIS) constitute a propeptide, removed in mature form.

As to quaternary structure, interacts with PPP1CA, PPP1CB and MSN. Interacts (via its fourth ankyrin repeat) with the mature dimeric form of RPSA/LAMR1. Interacts with EEF1A1. Interacts with PTEN. Interacts with ECE1. In terms of processing, phosphorylated by PKA and, after PKA priming, by GSK3B. Phosphorylation by GSK3B reduces its association with PP1C and enhances PP1C activity. Dephosphorylation by its associated PP1C results in enhanced association with PP1C, but reduced PP1C activity.

It localises to the cell membrane. The protein localises to the nucleus. Its subcellular location is the cell projection. Regulator of protein phosphatase 1 (PP1) that acts as a positive regulator of pulmonary endothelial cell (EC) barrier function. Protects the endothelial barrier from lipopolysaccharide (LPS)-induced vascular leakage. Involved in the regulation of the PI3K/AKT signaling pathway. Involved in the regulation of angiogenesis and endothelial cell proliferation through the control of ECE1 dephosphorylation, trafficking and activity. Involved in the regulation of endothelial cell filopodia extension. May be a downstream target for TGF-beta1 signaling cascade in endothelial cells. Involved in PKA-mediated moesin dephosphorylation which is important in EC barrier protection against thrombin stimulation. Promotes the interaction of PPP1CA with RPSA/LAMR1 and in turn facilitates the dephosphorylation of RPSA/LAMR1. Involved in the dephosphorylation of EEF1A1. This Bos taurus (Bovine) protein is Protein phosphatase 1 regulatory inhibitor subunit 16B (PPP1R16B).